The following is a 347-amino-acid chain: Fatty acid elongase 2 (347 aa).

At 1-62 the chain is on the lumenal side; that stretch reads MNSLVTQYAA…PSEFQFIAGE (62 aa). N-linked (GlcNAc...) asparagine glycosylation is present at asparagine 32. Residues 63 to 83 traverse the membrane as a helical segment; that stretch reads LPLSTLPPVLYAITAYYVIIF. Over 84 to 96 the chain is Cytoplasmic; the sequence is GGRFLLSKSKPFK. Residues 97–119 traverse the membrane as a helical segment; it reads LNGLFQLHNLVLTSLSLTLLLLM. Over 120 to 122 the chain is Lumenal; that stretch reads VEQ. The chain crosses the membrane as a helical span at residues 123 to 142; that stretch reads LVPIIVQHGLYFAICNIGAW. Residues 143–146 are Cytoplasmic-facing; it reads TQPL. Residues 147–169 traverse the membrane as a helical segment; that stretch reads VTLYYMNYIVKFIEFIDTFFLVL. Topologically, residues 170 to 200 are lumenal; it reads KHKKLTFLHTYHHGATALLCYTQLMGTTSIS. A HxxHH motif motif is present at residues 178-182; sequence HTYHH. A helical membrane pass occupies residues 201 to 221; the sequence is WVPISLNLGVHVVMYWYYFLA. Over 222–231 the chain is Cytoplasmic; the sequence is ARGIRVWWKE. The helical transmembrane segment at 232–254 threads the bilayer; the sequence is WVTRFQIIQFVLDIGFIYFAVYQ. Residues 255-275 are Lumenal-facing; it reads KAVHLYFPILPHCGDCVGSTT. A helical membrane pass occupies residues 276 to 296; the sequence is ATFAGCAIISSYLVLFISFYI. Residues 297–347 are Cytoplasmic-facing; that stretch reads NVYKRKGTKTSRVVKRAHGGVAAKVNEYVNVDLKNVPTPSPSPKPQHRRKR. At threonine 334 the chain carries Phosphothreonine. Phosphoserine is present on residues serine 336 and serine 338. A Di-lysine-like motif motif is present at residues 344–347; the sequence is RRKR.

It belongs to the ELO family.

It localises to the endoplasmic reticulum membrane. It carries out the reaction a very-long-chain acyl-CoA + malonyl-CoA + H(+) = a very-long-chain 3-oxoacyl-CoA + CO2 + CoA. The enzyme catalyses octadecanoyl-CoA + malonyl-CoA + H(+) = 3-oxoeicosanoyl-CoA + CO2 + CoA. It catalyses the reaction hexadecanoyl-CoA + malonyl-CoA + H(+) = 3-oxooctadecanoyl-CoA + CO2 + CoA. The catalysed reaction is eicosanoyl-CoA + malonyl-CoA + H(+) = 3-oxodocosanoyl-CoA + CO2 + CoA. It carries out the reaction docosanoyl-CoA + malonyl-CoA + H(+) = 3-oxotetracosanoyl-CoA + CO2 + CoA. Its function is as follows. Component of a microsomal membrane-bound long-chain fatty acid elongation system, which produces the 20-26-carbon very long-chain fatty acids (VLCFA) from long-chain fatty acid precursors and is involved ceramide and inositol sphingolipid biosynthesis. Component of elongase II, which elongates 16-18 carbon fatty acyl-CoAs such as palmitoyl-CoA and stearoyl-CoA to 20-22-carbon fatty acids by incorporation of malonyl-CoA. Involved in the synthesis of 1,3-beta-glucan. The enzymes active site faces the cytosol, whereas VLCFA length is determined by a lysine near the luminal end of transmembrane helix 6. Plays an important role in lipotoxic cell death induced by oleic acid through maintaining a balanced fatty acid composition in thr plasma membrane. The polypeptide is Fatty acid elongase 2 (Saccharomyces cerevisiae (strain ATCC 204508 / S288c) (Baker's yeast)).